Reading from the N-terminus, the 394-residue chain is MQRHVFARNFRRLSLLRNPSLTKRFQSSASGAANTPNNNDEVMLLQQKLLYDEIRSELKSLSQVPEDEILPELKKSLEQDKLSDKEQQLEAELSDFFRNYALLNKLFDSKTLDGQSSTTTAAATPTKPYPNLIPSANDKPYSSQELFLRQLNHSMRTAKLGATISKVYYPHKDIFYPPLPENITVESLMSAGVHLGQSTSLWRSSTQSYIYGEYKGIHIIDLNQTLSYLKRAAKVVEGVSESGGIILFLGTRQGQKRGLEEAAKKTHGYYVSTRWIPGTLTNSTEISGIWEKQEIDSNDNPTERALSPNETSKQVKPDLLVVLNPTENRNALLEAIKSRVPTIAIIDTDSEPSLVTYPIPGNDDSLRSVNFLLGVLARAGQRGLQNRLARNNEK.

Residues 1-25 (MQRHVFARNFRRLSLLRNPSLTKRF) constitute a mitochondrion transit peptide.

This sequence belongs to the universal ribosomal protein uS2 family. In terms of assembly, component of the mitochondrial small ribosomal subunit (mt-SSU). Mature yeast 74S mitochondrial ribosomes consist of a small (37S) and a large (54S) subunit. The 37S small subunit contains a 15S ribosomal RNA (15S mt-rRNA) and 34 different proteins. The 54S large subunit contains a 21S rRNA (21S mt-rRNA) and 46 different proteins.

It is found in the mitochondrion. Its function is as follows. Component of the mitochondrial ribosome (mitoribosome), a dedicated translation machinery responsible for the synthesis of mitochondrial genome-encoded proteins, including at least some of the essential transmembrane subunits of the mitochondrial respiratory chain. The mitoribosomes are attached to the mitochondrial inner membrane and translation products are cotranslationally integrated into the membrane. The protein is Small ribosomal subunit protein uS2m (MRP4) of Saccharomyces cerevisiae (strain ATCC 204508 / S288c) (Baker's yeast).